A 228-amino-acid polypeptide reads, in one-letter code: Venom allergen 5 (228 aa).

A signal peptide spans 1-22; it reads MTKIDLLARVFVIATIIALATA. 3 disulfides stabilise this stretch: cysteine 30–cysteine 124, cysteine 51–cysteine 117, and cysteine 195–cysteine 212. The SCP domain occupies 69-214; it reads KEHNDYGHKV…WNKHFLVCNY (146 aa).

This sequence belongs to the CRISP family. Venom allergen 5-like subfamily. As to expression, expressed by the venom gland.

The protein resides in the secreted. This Rhynchium brunneum (Potter wasp) protein is Venom allergen 5.